We begin with the raw amino-acid sequence, 196 residues long: Probable GTP-binding protein EngB (196 aa).

In terms of domain architecture, EngB-type G spans 24–196 (ELSEVALSGR…IWNLIEPYIS (173 aa)). GTP is bound by residues 32–39 (GRSNVGKS), 59–63 (GKTQT), 77–80 (DVPG), 144–147 (TKED), and 176–178 (YSS). Residues Ser-39 and Thr-61 each coordinate Mg(2+).

Belongs to the TRAFAC class TrmE-Era-EngA-EngB-Septin-like GTPase superfamily. EngB GTPase family. The cofactor is Mg(2+).

In terms of biological role, necessary for normal cell division and for the maintenance of normal septation. In Staphylococcus aureus (strain MW2), this protein is Probable GTP-binding protein EngB.